Consider the following 218-residue polypeptide: GTP cyclohydrolase 1 (218 aa).

Zn(2+) is bound by residues cysteine 109, histidine 112, and cysteine 180.

It belongs to the GTP cyclohydrolase I family. Toroid-shaped homodecamer, composed of two pentamers of five dimers.

The enzyme catalyses GTP + H2O = 7,8-dihydroneopterin 3'-triphosphate + formate + H(+). The protein operates within cofactor biosynthesis; 7,8-dihydroneopterin triphosphate biosynthesis; 7,8-dihydroneopterin triphosphate from GTP: step 1/1. The protein is GTP cyclohydrolase 1 (folE) of Pasteurella multocida (strain Pm70).